A 154-amino-acid chain; its full sequence is Large ribosomal subunit protein uL15 (154 aa).

Residues 1–61 are disordered; it reads MDLSTLKPVA…GGQMPLMRRM (61 aa).

Belongs to the universal ribosomal protein uL15 family. In terms of assembly, part of the 50S ribosomal subunit.

Functionally, binds to the 23S rRNA. In Oenococcus oeni (strain ATCC BAA-331 / PSU-1), this protein is Large ribosomal subunit protein uL15.